The primary structure comprises 603 residues: NADH-ubiquinone oxidoreductase chain 5 (603 aa).

A run of 16 helical transmembrane segments spans residues 4-24 (LPTLTLISLIILTSPIMLSPL), 38-58 (MAVSYAFMVSMVPAMIFMHSG), 87-107 (LIFMPVALFVTWSIMEFSLWY), 117-137 (FFKYLLLFLITMIILITANNL), 140-160 (LFIGWEGVGIMSFLLIGWWYG), 171-191 (AMIYNRIGDVGFVAAMAWFLL), 211-233 (LPLTGLLLAAMGKSAQFGLHPWL), 241-261 (TPVSALLHSSTMVVAGVFLLI), 273-293 (ILTLTLCVGAITTLFTAICAL), 301-320 (IIAFSTSSQLGLMMVTIGIN), 331-351 (THAFFKAMLFMCSGSIIHSLG), 366-386 (LPFTTTALIIGSLALTGMPFL), 409-429 (LLITFIATSMTAVYSTRIIFF), 457-477 (LMLGSIFAGFLISSNLPPTTV), 488-508 (FMALAVTLLGFALAIELSSFT), and 583-603 (MIKLYFLSFLISLTLGLLLII).

The protein belongs to the complex I subunit 5 family.

The protein resides in the mitochondrion inner membrane. The catalysed reaction is a ubiquinone + NADH + 5 H(+)(in) = a ubiquinol + NAD(+) + 4 H(+)(out). Functionally, core subunit of the mitochondrial membrane respiratory chain NADH dehydrogenase (Complex I) that is believed to belong to the minimal assembly required for catalysis. Complex I functions in the transfer of electrons from NADH to the respiratory chain. The immediate electron acceptor for the enzyme is believed to be ubiquinone. In Dugong dugon (Dugong), this protein is NADH-ubiquinone oxidoreductase chain 5 (MT-ND5).